The chain runs to 835 residues: Protein translocase subunit SecA 1 (835 aa).

Residues Q85, 103-107, and D492 contribute to the ATP site; that span reads GEGKT. The disordered stretch occupies residues 788 to 807; that stretch reads VQGEAVHPSSDGEEAKKKPV. Zn(2+) contacts are provided by C819, C821, C830, and C831.

It belongs to the SecA family. In terms of assembly, monomer and homodimer. Part of the essential Sec protein translocation apparatus which comprises SecA, SecYEG and auxiliary proteins SecDF. Other proteins may also be involved. The cofactor is Zn(2+).

The protein localises to the cell membrane. Its subcellular location is the cytoplasm. It catalyses the reaction ATP + H2O + cellular proteinSide 1 = ADP + phosphate + cellular proteinSide 2.. Part of the Sec protein translocase complex. Interacts with the SecYEG preprotein conducting channel. Has a central role in coupling the hydrolysis of ATP to the transfer of proteins into and across the cell membrane, serving as an ATP-driven molecular motor driving the stepwise translocation of polypeptide chains across the membrane. This is Protein translocase subunit SecA 1 from Bacillus anthracis.